A 181-amino-acid chain; its full sequence is GMP synthase [glutamine-hydrolyzing] subunit A (181 aa).

Residues 2–181 (KILVVNNYGQ…FDNFLEICRR (180 aa)) form the Glutamine amidotransferase type-1 domain. Residue cysteine 72 is the Nucleophile of the active site. Catalysis depends on residues histidine 159 and glutamate 161.

Heterodimer composed of a glutamine amidotransferase subunit (A) and a GMP-binding subunit (B).

The enzyme catalyses XMP + L-glutamine + ATP + H2O = GMP + L-glutamate + AMP + diphosphate + 2 H(+). Its pathway is purine metabolism; GMP biosynthesis; GMP from XMP (L-Gln route): step 1/1. Catalyzes the synthesis of GMP from XMP. In Methanothrix thermoacetophila (strain DSM 6194 / JCM 14653 / NBRC 101360 / PT) (Methanosaeta thermophila), this protein is GMP synthase [glutamine-hydrolyzing] subunit A.